The primary structure comprises 434 residues: Probable oxaloacetate decarboxylase beta chain (434 aa).

The next 9 membrane-spanning stretches (helical) occupy residues 13–35 (IMHLELGQALMMLISLVLLWLAI), 122–144 (VLALFYKVAIGYGVAPLIIFMGV), 159–181 (TLLLGAAAQFGIFATIIGALLLN), 186–208 (ISFTLPQAAAIGIIGGADGPTAI), 223–245 (AVAAYSYMALVPLIQPPIMRALT), 266–288 (ILFPIVLVTLVALLLPDAAPLLG), 308–327 (TAQNALINIVTIFLGLAVGS), 339–361 (TLGILLLGVVAFCIGTASGVIMA), and 403–425 (FLLMHAMGPNVAGVIGSAIAAGV).

Belongs to the GcdB/MmdB/OadB family. As to quaternary structure, heterotrimer of an alpha, a beta and a gamma subunit. Na(+) serves as cofactor.

The protein localises to the cell membrane. The enzyme catalyses oxaloacetate + 2 Na(+)(in) + H(+) = pyruvate + 2 Na(+)(out) + CO2. Catalyzes the decarboxylation of oxaloacetate coupled to Na(+) translocation. The sequence is that of Probable oxaloacetate decarboxylase beta chain (oadB) from Pasteurella multocida (strain Pm70).